The sequence spans 546 residues: MAAKDIRFGEDARTRMVRGVNVLANAVKATLGPKGRNVVLEKSFGAPTITKDGVSVAKEIELADKFENMGAQMVKEVASKTNDNAGDGTTTATVLAQALIREGAKAVAAGMNPMDLKRGIDQAVKAAVVELKNISKPTTDDKAIAQVGTISANSDESIGNIIAEAMQKVGKEGVITVEEGSGLENELDVVEGMQFDRGYLSPYFINNQQSQSADLDDPFILLHDKKISNVRDLLPVLEGVAKAGKPLLIVAEEVEGEALATLVVNTIRGIVKVVAVKAPGFGDRRKAMLEDMAVLTGGTVISEEVGLALEKATIKDLGRAKKVQVSKENTTIIDGAGDTAAIESRVGQIKTQIEDTSSDYDREKLQERVAKLAGGVAVIKVGASTEIEMKEKKARVEDALHATRAAVEEGVVPGGGVALVRALVAVGELKGANEDQTHGIQIALRAMEAPLREIVANAGEEPSVILNKVKEGSGNYGYNAANGEFGDMVQFGILDPTKVTRSALQNAASIAGLMITTEAMVADAPKKDEPVMPAGGGMGGMGGMDF.

Residues 30–33, K51, 87–91, G415, 479–481, and D495 each bind ATP; these read TLGP, DGTTT, and NAA.

The protein belongs to the chaperonin (HSP60) family. In terms of assembly, forms a cylinder of 14 subunits composed of two heptameric rings stacked back-to-back. Interacts with the co-chaperonin GroES.

The protein localises to the cytoplasm. The catalysed reaction is ATP + H2O + a folded polypeptide = ADP + phosphate + an unfolded polypeptide.. Functionally, together with its co-chaperonin GroES, plays an essential role in assisting protein folding. The GroEL-GroES system forms a nano-cage that allows encapsulation of the non-native substrate proteins and provides a physical environment optimized to promote and accelerate protein folding. The protein is Chaperonin GroEL of Xanthomonas campestris pv. phaseoli.